A 251-amino-acid polypeptide reads, in one-letter code: NAD kinase (251 aa).

The Proton acceptor role is filled by Asp51. NAD(+) contacts are provided by residues 51-52 (DG), Lys56, 113-114 (NE), Lys124, His140, Asp142, 153-158 (TGYSLS), and Ala177.

It belongs to the NAD kinase family. Requires a divalent metal cation as cofactor.

Its subcellular location is the cytoplasm. The enzyme catalyses NAD(+) + ATP = ADP + NADP(+) + H(+). Its function is as follows. Involved in the regulation of the intracellular balance of NAD and NADP, and is a key enzyme in the biosynthesis of NADP. Catalyzes specifically the phosphorylation on 2'-hydroxyl of the adenosine moiety of NAD to yield NADP. The polypeptide is NAD kinase (Thermosipho melanesiensis (strain DSM 12029 / CIP 104789 / BI429)).